We begin with the raw amino-acid sequence, 892 residues long: Alanine--tRNA ligase (892 aa).

Residues histidine 577, histidine 581, cysteine 680, and histidine 684 each coordinate Zn(2+).

Belongs to the class-II aminoacyl-tRNA synthetase family. The cofactor is Zn(2+).

The protein localises to the cytoplasm. The catalysed reaction is tRNA(Ala) + L-alanine + ATP = L-alanyl-tRNA(Ala) + AMP + diphosphate. Catalyzes the attachment of alanine to tRNA(Ala) in a two-step reaction: alanine is first activated by ATP to form Ala-AMP and then transferred to the acceptor end of tRNA(Ala). Also edits incorrectly charged Ser-tRNA(Ala) and Gly-tRNA(Ala) via its editing domain. This chain is Alanine--tRNA ligase, found in Paenarthrobacter aurescens (strain TC1).